Here is a 422-residue protein sequence, read N- to C-terminus: UDP-N-acetylglucosamine 1-carboxyvinyltransferase (422 aa).

22–23 (KN) lines the phosphoenolpyruvate pocket. Arg-94 is a binding site for UDP-N-acetyl-alpha-D-glucosamine. Catalysis depends on Cys-118, which acts as the Proton donor. Cys-118 is modified (2-(S-cysteinyl)pyruvic acid O-phosphothioketal). UDP-N-acetyl-alpha-D-glucosamine is bound by residues 123–127 (RPVDL), Asp-309, and Ile-331.

This sequence belongs to the EPSP synthase family. MurA subfamily.

The protein localises to the cytoplasm. It carries out the reaction phosphoenolpyruvate + UDP-N-acetyl-alpha-D-glucosamine = UDP-N-acetyl-3-O-(1-carboxyvinyl)-alpha-D-glucosamine + phosphate. Its pathway is cell wall biogenesis; peptidoglycan biosynthesis. In terms of biological role, cell wall formation. Adds enolpyruvyl to UDP-N-acetylglucosamine. The chain is UDP-N-acetylglucosamine 1-carboxyvinyltransferase from Cereibacter sphaeroides (strain ATCC 17029 / ATH 2.4.9) (Rhodobacter sphaeroides).